The following is a 170-amino-acid chain: Double homeobox protein 1 (170 aa).

2 DNA-binding regions (homeobox) span residues G19–H78 and G94–S153. The segment at L75–A100 is disordered.

It belongs to the paired homeobox family. As to expression, expressed in rhabdomyosarcoma TE671 cells as well as in several other normal and cancer cells.

It is found in the nucleus. In terms of biological role, probable transcription activator. Binds the P5 DNA element sequence 5'-GATCTGAGTCTAATTGAGAATTACTGTAC-3'. The chain is Double homeobox protein 1 (DUX1) from Homo sapiens (Human).